The following is a 958-amino-acid chain: Atromentin synthetase greA (958 aa).

Positions 60 to 465 are adenylation (A) domain; the sequence is SIQTKTFSAF…SGRIKDTVIV (406 aa). Residues 597–675 form the Carrier domain; that stretch reads APSTETEKAL…SLANYVNALL (79 aa). Positions 602-672 are thiolation and peptide carrier (T) domain; sequence TEKALAKIYA…VVSSLANYVN (71 aa). The residue at position 634 (serine 634) is an O-(pantetheine 4'-phosphoryl)serine. The thioesterase (TE) domain stretch occupies residues 698-946; the sequence is PIFFVHPGVG…MDFDHVPQFQ (249 aa).

It belongs to the ATP-dependent AMP-binding enzyme family.

Its pathway is secondary metabolite biosynthesis. In terms of biological role, an L-tyrosine:2-oxoglutarate aminotransferase and atromentin synthetase greA catalyze consecutive steps to turn over L-tyrosine into atromentin, which represents the generic precursor molecule for the entire terphenylquinone and pulvinic acid family of pigments, which are widely distributed secondary metabolites in homobasidiomycetes. The first step catalyzed by the aminotransferase converts L-tyrosine in to 4-hydroxyphenylpyruvate (4-HPP). Adenylation of two 4-HPP monomers by the greA adenylation (A) domain, covalent tethering of the monomers as a thioester and oxoester onto the greA thiolation (T) and thioesterase (TE) domains, respectively, and symmetric C-C-bond formation between two monomers catalyzed by the greA TE domain leads to atromentin. The sequence is that of Atromentin synthetase greA (greA) from Suillus grevillei (Larch bolete).